An 84-amino-acid polypeptide reads, in one-letter code: Small ribosomal subunit protein bS16c (84 aa).

It belongs to the bacterial ribosomal protein bS16 family.

It is found in the plastid. Its subcellular location is the chloroplast. This chain is Small ribosomal subunit protein bS16c, found in Mesostigma viride (Green alga).